Here is a 574-residue protein sequence, read N- to C-terminus: (R)-mandelonitrile lyase 4 (574 aa).

Positions 1 to 27 (MEKSTMSAVVLVLNLLVLHLQYSEVHS) are cleaved as a signal peptide. A glycan (N-linked (GlcNAc...) asparagine) is linked at asparagine 30. An FAD-binding site is contributed by 64–65 (TS). The N-linked (GlcNAc...) asparagine glycan is linked to asparagine 76. Residues 83–84 (ER), threonine 134, and 138–141 (NAGV) each bind FAD. Residues asparagine 146, asparagine 151, and asparagine 179 are each glycosylated (N-linked (GlcNAc...) asparagine). Valine 245 serves as a coordination point for FAD. N-linked (GlcNAc...) asparagine glycosylation is found at asparagine 268 and asparagine 310. Substrate is bound at residue cysteine 357. Residues asparagine 381, asparagine 407, and asparagine 468 are each glycosylated (N-linked (GlcNAc...) asparagine). An intrachain disulfide couples cysteine 428 to cysteine 479. Tyrosine 486 lines the substrate pocket. FAD is bound by residues 487-488 (WH) and glycine 516. The active-site Proton donor is the histidine 488. The active-site Proton acceptor is histidine 526. FAD is bound at residue 527-528 (PQ).

It belongs to the GMC oxidoreductase family. Monomer. The cofactor is FAD.

The protein localises to the vacuole. It localises to the aleurone grain. The enzyme catalyses (R)-mandelonitrile = benzaldehyde + hydrogen cyanide. In terms of biological role, involved in cyanogenesis, the release of HCN from injured tissues. Catalyzes the stereospecific addition of HCN to a variety of aldehydes in vitro. It is a major seed constituent, and could have the additional role of a storage form for reduced nitrogen. The chain is (R)-mandelonitrile lyase 4 (MDL4) from Prunus serotina (Black cherry).